Reading from the N-terminus, the 358-residue chain is Peptide chain release factor 1 (358 aa).

At Q237 the chain carries N5-methylglutamine. Positions 291–309 (EESGYRKLAGHGDRSEKIR) are enriched in basic and acidic residues. The interval 291-313 (EESGYRKLAGHGDRSEKIRTYNY) is disordered.

Belongs to the prokaryotic/mitochondrial release factor family. In terms of processing, methylated by PrmC. Methylation increases the termination efficiency of RF1.

It localises to the cytoplasm. Its function is as follows. Peptide chain release factor 1 directs the termination of translation in response to the peptide chain termination codons UAG and UAA. The protein is Peptide chain release factor 1 of Mycoplasmopsis agalactiae (strain NCTC 10123 / CIP 59.7 / PG2) (Mycoplasma agalactiae).